The sequence spans 333 residues: Transcription factor TGA2.2 (333 aa).

A compositionally biased stretch (polar residues) spans Met1–Leu14. Residues Met1–Gln48 form a disordered region. Basic and acidic residues predominate over residues Asp37 to Gln48. Positions Asp47–Lys91 constitute a bZIP domain. The interval Lys49–Lys69 is basic motif. A leucine-zipper region spans residues Leu75–Ile89. In terms of domain architecture, DOG1 spans Ala114 to Arg330.

The protein belongs to the bZIP family. As to quaternary structure, interacts with NPR1/NH1. Interacts with NPR3/NH3.

The protein localises to the nucleus. Functionally, transcriptional regulator involved in defense response. This is Transcription factor TGA2.2 from Oryza sativa subsp. japonica (Rice).